The sequence spans 333 residues: 2-oxoglutarate-dependent dioxygenase 21, chloroplastic (333 aa).

Residues 1–43 (MPAVAGSLYMASQHKGVPPPLPPPPRPLPVINLGRLTMDSASR) constitute a chloroplast transit peptide. Residues 180–281 (GVQFVALNNY…RISIASIHGL (102 aa)) enclose the Fe2OG dioxygenase domain. Fe cation-binding residues include His205, Asp207, and His262. A 2-oxoglutarate-binding site is contributed by Arg272.

Belongs to the iron/ascorbate-dependent oxidoreductase family. Requires Fe(2+) as cofactor. It depends on L-ascorbate as a cofactor. Expressed in roots.

The protein resides in the plastid. It localises to the chloroplast. The enzyme catalyses melatonin + 2-oxoglutarate + O2 = 2-hydroxymelatonin + succinate + CO2. Its function is as follows. Involved in melatonin degradation. Catalyzes the hydroxylation of melatonin to produce 2-hydroxymelatonin. This chain is 2-oxoglutarate-dependent dioxygenase 21, chloroplastic, found in Oryza sativa subsp. japonica (Rice).